Reading from the N-terminus, the 333-residue chain is DNA-directed RNA polymerase subunit alpha (333 aa).

The interval 1–227 is alpha N-terminal domain (alpha-NTD); it reads MRKIKVAPFM…VMNKQLSVFN (227 aa). The alpha C-terminal domain (alpha-CTD) stretch occupies residues 247 to 333; that stretch reads ELKPFLAAVD…LVKKLEQLKA (87 aa).

This sequence belongs to the RNA polymerase alpha chain family. Homodimer. The RNAP catalytic core consists of 2 alpha, 1 beta, 1 beta' and 1 omega subunit. When a sigma factor is associated with the core the holoenzyme is formed, which can initiate transcription.

It catalyses the reaction RNA(n) + a ribonucleoside 5'-triphosphate = RNA(n+1) + diphosphate. In terms of biological role, DNA-dependent RNA polymerase catalyzes the transcription of DNA into RNA using the four ribonucleoside triphosphates as substrates. This Sulfurovum sp. (strain NBC37-1) protein is DNA-directed RNA polymerase subunit alpha.